The chain runs to 410 residues: DNA replication and repair protein RecF (410 aa).

30-37 (GPNGHGKT) contributes to the ATP binding site.

The protein belongs to the RecF family.

It is found in the cytoplasm. The RecF protein is involved in DNA metabolism; it is required for DNA replication and normal SOS inducibility. RecF binds preferentially to single-stranded, linear DNA. It also seems to bind ATP. In Rhodococcus opacus (strain B4), this protein is DNA replication and repair protein RecF.